Here is a 565-residue protein sequence, read N- to C-terminus: Urease subunit beta (565 aa).

Residues 130–565 (GGIDTHIHFI…LALARKYFMI (436 aa)) enclose the Urease domain. The Ni(2+) site is built by His-135, His-137, and Lys-218. N6-carboxylysine is present on Lys-218. A substrate-binding site is contributed by His-220. Ni(2+)-binding residues include His-247 and His-273. His-321 functions as the Proton donor in the catalytic mechanism. Asp-361 is a binding site for Ni(2+).

It belongs to the metallo-dependent hydrolases superfamily. Urease alpha subunit family. As to quaternary structure, heterohexamer of 3 UreA (alpha) and 3 UreB (beta) subunits. Requires Ni cation as cofactor. Carboxylation allows a single lysine to coordinate two nickel ions.

The protein localises to the cytoplasm. The catalysed reaction is urea + 2 H2O + H(+) = hydrogencarbonate + 2 NH4(+). Its pathway is nitrogen metabolism; urea degradation; CO(2) and NH(3) from urea (urease route): step 1/1. This is Urease subunit beta from Campylobacter lari.